Consider the following 356-residue polypeptide: MSNDIEFRKLEHLFVCNYCDVEYKKGTLLEDVELIHSGISNCDLEDIDTSINLFGKNLGAPIIVAAITGGHSKAKEINKNIAIAIDELNLGMGVGSQRAALINEELMETYSVVRDYTSSLVLGNLGAVNFIEDGWDEETIHKAVEMIDADGMAIHFNPLQEAIQPEGDYNFKGIEILKDIMENYNKTYNNKSNKKIPFIAKQVGEGFSKEDALLLNGLGFDSIDVGGSGGTSWAAVEYYRIKDEESKKFSKKYLEWGIPTAASILEVKQNFDKPIIATGGIRSGMDIAKSMAIGAQCCGVALPVLKAALRGSEDVIKLIENYIEELKTTMFLMGCDNVNELMNSRYIIKNELKEWI.

Residue 8-9 participates in substrate binding; it reads RK. Residues 66-68, Ser-96, and Asn-124 each bind FMN; that span reads AIT. Substrate is bound at residue 96–98; it reads SQR. Substrate is bound at residue Gln-160. Glu-161 lines the Mg(2+) pocket. FMN-binding positions include Lys-201, Thr-231, 280–282, and 301–302; these read GIR and AL.

It belongs to the IPP isomerase type 2 family. Homooctamer. Dimer of tetramers. FMN serves as cofactor. NADPH is required as a cofactor. The cofactor is Mg(2+).

The protein localises to the cytoplasm. It catalyses the reaction isopentenyl diphosphate = dimethylallyl diphosphate. In terms of biological role, involved in the biosynthesis of isoprenoids. Catalyzes the 1,3-allylic rearrangement of the homoallylic substrate isopentenyl (IPP) to its allylic isomer, dimethylallyl diphosphate (DMAPP). In Methanococcus aeolicus (strain ATCC BAA-1280 / DSM 17508 / OCM 812 / Nankai-3), this protein is Isopentenyl-diphosphate delta-isomerase.